We begin with the raw amino-acid sequence, 390 residues long: NADH-quinone oxidoreductase subunit D (390 aa).

The protein belongs to the complex I 49 kDa subunit family. In terms of assembly, NDH-1 is composed of 14 different subunits. Subunits NuoB, C, D, E, F, and G constitute the peripheral sector of the complex.

It is found in the cell inner membrane. The enzyme catalyses a quinone + NADH + 5 H(+)(in) = a quinol + NAD(+) + 4 H(+)(out). NDH-1 shuttles electrons from NADH, via FMN and iron-sulfur (Fe-S) centers, to quinones in the respiratory chain. The immediate electron acceptor for the enzyme in this species is believed to be ubiquinone. Couples the redox reaction to proton translocation (for every two electrons transferred, four hydrogen ions are translocated across the cytoplasmic membrane), and thus conserves the redox energy in a proton gradient. The polypeptide is NADH-quinone oxidoreductase subunit D (Trichlorobacter lovleyi (strain ATCC BAA-1151 / DSM 17278 / SZ) (Geobacter lovleyi)).